Here is a 122-residue protein sequence, read N- to C-terminus: Large ribosomal subunit protein uL14 (122 aa).

Belongs to the universal ribosomal protein uL14 family. In terms of assembly, part of the 50S ribosomal subunit. Forms a cluster with proteins L3 and L19. In the 70S ribosome, L14 and L19 interact and together make contacts with the 16S rRNA in bridges B5 and B8.

In terms of biological role, binds to 23S rRNA. Forms part of two intersubunit bridges in the 70S ribosome. This is Large ribosomal subunit protein uL14 from Borrelia recurrentis (strain A1).